Consider the following 130-residue polypeptide: Small ribosomal subunit protein uS11 (130 aa).

Belongs to the universal ribosomal protein uS11 family. As to quaternary structure, part of the 30S ribosomal subunit. Interacts with proteins S7 and S18. Binds to IF-3.

In terms of biological role, located on the platform of the 30S subunit, it bridges several disparate RNA helices of the 16S rRNA. Forms part of the Shine-Dalgarno cleft in the 70S ribosome. The sequence is that of Small ribosomal subunit protein uS11 from Prochlorococcus marinus (strain MIT 9211).